We begin with the raw amino-acid sequence, 509 residues long: Cardiolipin synthase 1 (509 aa).

Transmembrane regions (helical) follow at residues 4–24, 30–50, and 59–79; these read PIVQ…LLNT, YTFV…VIFI, and LAWF…YAIF. 2 PLD phosphodiesterase domains span residues 238-265 and 422-449; these read VNYR…GDEY and KDGF…DVRS. Catalysis depends on residues His243, Lys245, Asp250, His427, Lys429, and Asp434.

It belongs to the phospholipase D family. Cardiolipin synthase subfamily.

The protein resides in the cell membrane. It carries out the reaction 2 a 1,2-diacyl-sn-glycero-3-phospho-(1'-sn-glycerol) = a cardiolipin + glycerol. Functionally, catalyzes the reversible phosphatidyl group transfer from one phosphatidylglycerol molecule to another to form cardiolipin (CL) (diphosphatidylglycerol) and glycerol. This Bacillus cereus (strain ATCC 14579 / DSM 31 / CCUG 7414 / JCM 2152 / NBRC 15305 / NCIMB 9373 / NCTC 2599 / NRRL B-3711) protein is Cardiolipin synthase 1 (cls1).